We begin with the raw amino-acid sequence, 480 residues long: Sporozoite surface protein P36p (480 aa).

The first 22 residues, 1–22 (MKRRSIFMYYCFCFLLKYVAFS), serve as a signal peptide directing secretion. 6-Cys domains are found at residues 23-156 (NVPN…FKKM) and 159-298 (KIKG…TSKN). Asparagine 28, asparagine 40, asparagine 92, asparagine 111, and asparagine 184 each carry an N-linked (GlcNAc...) asparagine glycan. 6 disulfides stabilise this stretch: cysteine 37/cysteine 49, cysteine 63/cysteine 137, cysteine 80/cysteine 135, cysteine 163/cysteine 187, cysteine 201/cysteine 280, and cysteine 221/cysteine 278. Asparagine 294, asparagine 368, asparagine 375, asparagine 392, asparagine 405, asparagine 409, and asparagine 424 each carry an N-linked (GlcNAc...) asparagine glycan. A disordered region spans residues 358–415 (KMDSSDDDESNETESSENESNERTHNGNRANKDANNSEKMTGNRRKKNNSINNTNYYS). A compositionally biased stretch (acidic residues) spans 362–376 (SDDDESNETESSENE). The segment covering 377–393 (SNERTHNGNRANKDANN) has biased composition (basic and acidic residues). Residues 406–415 (NSINNTNYYS) show a composition bias toward low complexity. Serine 457 is lipidated: GPI-anchor amidated serine. Positions 458–480 (SSYYEVFNYFSIAFILIIHMLLL) are cleaved as a propeptide — removed in mature form.

It is found in the cell surface. The protein resides in the cell membrane. Its function is as follows. Involved in sporozoite infection of hepatocytes and replication therein. The chain is Sporozoite surface protein P36p (P52) from Plasmodium yoelii yoelii.